The following is a 220-amino-acid chain: Uracil phosphoribosyltransferase 2 (220 aa).

77-80 contacts GTP; sequence ARDI. 5-phospho-alpha-D-ribose 1-diphosphate is bound by residues Arg87 and Arg113. Residue Arg134 coordinates GTP. Residues Asp140 and 140 to 148 contribute to the 5-phospho-alpha-D-ribose 1-diphosphate site; that span reads DPLLATGNS. Tyr204 serves as a coordination point for D-ribose 5-phosphate. Residues Val205 and 210–212 contribute to the uracil site; that span reads GDF. Asp211 lines the 5-phospho-alpha-D-ribose 1-diphosphate pocket.

It belongs to the UPRTase family. Mg(2+) serves as cofactor.

The enzyme catalyses UMP + diphosphate = 5-phospho-alpha-D-ribose 1-diphosphate + uracil. Its pathway is pyrimidine metabolism; UMP biosynthesis via salvage pathway; UMP from uracil: step 1/1. Its activity is regulated as follows. Allosterically activated by GTP. Functionally, catalyzes the conversion of uracil and 5-phospho-alpha-D-ribose 1-diphosphate (PRPP) to UMP and diphosphate. This is Uracil phosphoribosyltransferase 2 from Schizosaccharomyces pombe (strain 972 / ATCC 24843) (Fission yeast).